The chain runs to 592 residues: Aspartate--tRNA(Asp/Asn) ligase (592 aa).

Glu175 contributes to the L-aspartate binding site. Residues 199-202 (QLFK) form an aspartate region. Position 221 (Arg221) interacts with L-aspartate. ATP is bound by residues 221 to 223 (RDE) and Gln230. His450 contributes to the L-aspartate binding site. Glu483 provides a ligand contact to ATP. Arg490 contacts L-aspartate. 535-538 (GLDR) provides a ligand contact to ATP.

This sequence belongs to the class-II aminoacyl-tRNA synthetase family. Type 1 subfamily. Homodimer.

It is found in the cytoplasm. It catalyses the reaction tRNA(Asx) + L-aspartate + ATP = L-aspartyl-tRNA(Asx) + AMP + diphosphate. Its function is as follows. Aspartyl-tRNA synthetase with relaxed tRNA specificity since it is able to aspartylate not only its cognate tRNA(Asp) but also tRNA(Asn). Reaction proceeds in two steps: L-aspartate is first activated by ATP to form Asp-AMP and then transferred to the acceptor end of tRNA(Asp/Asn). This chain is Aspartate--tRNA(Asp/Asn) ligase, found in Acinetobacter baumannii (strain ATCC 17978 / DSM 105126 / CIP 53.77 / LMG 1025 / NCDC KC755 / 5377).